A 68-amino-acid chain; its full sequence is Cx9C motif-containing protein 4 (68 aa).

The CHCH domain occupies 4–46; sequence KDPCQKQACEIQKCLQANSYMESKCQAVIQELRKCCAQYPKGR. 2 short sequence motifs (cx9C motif) span residues 7–17 and 28–38; these read CQKQACEIQKC and CQAVIQELRKC. 3 disulfide bridges follow: C7-C38, C17-C28, and C39-C50.

It belongs to the CMC4 family. Expressed in many tissues with a relatively high level in skeletal muscle.

Its subcellular location is the mitochondrion. This is Cx9C motif-containing protein 4 (CMC4) from Homo sapiens (Human).